The sequence spans 1639 residues: RIMS-binding protein 3B (1639 aa).

Disordered stretches follow at residues 1–22, 215–240, and 295–364; these read MAKDSPSPLGASPKKPGCSSPA, GSPDPQAVHSLEEPLPQTSSGSCHAP, and SLDS…LTPS. Residues 21 to 143 are a coiled coil; sequence PAAAVLENQR…ELQRQLAEEL (123 aa). The span at 326–339 shows a compositional bias: pro residues; it reads SPPPSPLPPPPPPS. Coiled-coil stretches lie at residues 409–442 and 480–619; these read QADEKVKRLKVKRAELTGLARRLADRARELQETN and LAKD…AEEN. Residues 697-811 are disordered; that stretch reads CRPGHPPEQP…DRDTASEVDD (115 aa). Polar residues-rich tracts occupy residues 707–718 and 761–775; these read WETSQMPESQVK and SVPQVSETVPASQPL. A compositionally biased stretch (low complexity) spans 776–790; the sequence is SKKTSSQSNSSSEGS. The SH3 1 domain occupies 832–899; the sequence is PKLKIFMAQY…PSNFVEQIPD (68 aa). Fibronectin type-III domains lie at 995-1083 and 1088-1184; these read APMQ…TLLA and PPLE…IPED. Disordered regions lie at residues 1251–1273, 1292–1325, and 1392–1413; these read PRRQSPVSNLGSEGECPSSGAGS, QKSPQNHRPPSVSDQPGEKENCYQHMGTSKSPAP, and GTERREERREPEPHSRQGQALG. The span at 1293–1305 shows a compositional bias: polar residues; the sequence is KSPQNHRPPSVSD. Basic and acidic residues predominate over residues 1392 to 1406; it reads GTERREERREPEPHS. SH3 domains lie at 1452–1520 and 1569–1636; these read TPAR…EMEV and WTPK…HMSL.

This sequence belongs to the RIMBP family. In terms of assembly, interacts with LRGUK (via guanylate kinase-like domain). Interacts (via C-terminus) with HOOK1 (via coiled-coil region).

The protein resides in the cytoplasm. Its subcellular location is the cytoskeleton. Functionally, probable component of the manchette, a microtubule-based structure which plays a key role in sperm head morphogenesis during late stages of sperm development. The protein is RIMS-binding protein 3B (RIMBP3B) of Homo sapiens (Human).